We begin with the raw amino-acid sequence, 336 residues long: Glyceraldehyde-3-phosphate dehydrogenase (336 aa).

Residues 12–13 (RI), aspartate 35, arginine 79, and serine 121 contribute to the NAD(+) site. D-glyceraldehyde 3-phosphate-binding positions include 152–154 (SCT) and threonine 183. Cysteine 153 acts as the Nucleophile in catalysis. Asparagine 184 serves as a coordination point for NAD(+). D-glyceraldehyde 3-phosphate-binding positions include arginine 198, 211–212 (TG), and arginine 234. Asparagine 317 contacts NAD(+).

The protein belongs to the glyceraldehyde-3-phosphate dehydrogenase family. As to quaternary structure, homotetramer.

It localises to the cytoplasm. The catalysed reaction is D-glyceraldehyde 3-phosphate + phosphate + NAD(+) = (2R)-3-phospho-glyceroyl phosphate + NADH + H(+). It participates in carbohydrate degradation; glycolysis; pyruvate from D-glyceraldehyde 3-phosphate: step 1/5. Resistant to pentalenolactone. Its function is as follows. Catalyzes the oxidative phosphorylation of glyceraldehyde 3-phosphate (G3P) to 1,3-bisphosphoglycerate (BPG) using the cofactor NAD. The first reaction step involves the formation of a hemiacetal intermediate between G3P and a cysteine residue, and this hemiacetal intermediate is then oxidized to a thioester, with concomitant reduction of NAD to NADH. The reduced NADH is then exchanged with the second NAD, and the thioester is attacked by a nucleophilic inorganic phosphate to produce BPG. This is Glyceraldehyde-3-phosphate dehydrogenase (gap) from Streptomyces coelicolor (strain ATCC BAA-471 / A3(2) / M145).